The following is a 613-amino-acid chain: Dihydroxy-acid dehydratase (613 aa).

D81 contacts Mg(2+). A [2Fe-2S] cluster-binding site is contributed by C122. Residues D123 and K124 each contribute to the Mg(2+) site. K124 is modified (N6-carboxylysine). C195 contributes to the [2Fe-2S] cluster binding site. E491 lines the Mg(2+) pocket. The active-site Proton acceptor is S517.

The protein belongs to the IlvD/Edd family. In terms of assembly, homodimer. [2Fe-2S] cluster is required as a cofactor. The cofactor is Mg(2+).

It carries out the reaction (2R)-2,3-dihydroxy-3-methylbutanoate = 3-methyl-2-oxobutanoate + H2O. The catalysed reaction is (2R,3R)-2,3-dihydroxy-3-methylpentanoate = (S)-3-methyl-2-oxopentanoate + H2O. The protein operates within amino-acid biosynthesis; L-isoleucine biosynthesis; L-isoleucine from 2-oxobutanoate: step 3/4. Its pathway is amino-acid biosynthesis; L-valine biosynthesis; L-valine from pyruvate: step 3/4. Its function is as follows. Functions in the biosynthesis of branched-chain amino acids. Catalyzes the dehydration of (2R,3R)-2,3-dihydroxy-3-methylpentanoate (2,3-dihydroxy-3-methylvalerate) into 2-oxo-3-methylpentanoate (2-oxo-3-methylvalerate) and of (2R)-2,3-dihydroxy-3-methylbutanoate (2,3-dihydroxyisovalerate) into 2-oxo-3-methylbutanoate (2-oxoisovalerate), the penultimate precursor to L-isoleucine and L-valine, respectively. The chain is Dihydroxy-acid dehydratase from Nitrobacter hamburgensis (strain DSM 10229 / NCIMB 13809 / X14).